The following is a 517-amino-acid chain: Ribosome assembly protein 4 (517 aa).

The segment at 1–25 (MATLAPPPSKRQRREEIQRTQTQQD) is disordered. Residues 34–128 (LGSFKANFID…TITLSAEPQA (95 aa)) form a ubiquitin-like (UBL) domain region. WD repeat units follow at residues 144–184 (GHGQ…PKFT), 187–226 (GHTG…QVNQ), 230–277 (GHAK…HVLS), 278–316 (GHKG…LVHN), 351–397 (EERR…SKPV), 402–441 (GHQN…FIKN), 444–483 (GHVA…LAMD), and 486–517 (GHED…TWRN).

The protein belongs to the NLE1/RSA4 family. In terms of assembly, associates with the pre-60S ribosomal particle. Interacts (via WD repeats) with uL18. Interacts (via UBL domain) with MDN1 (via VWFA/MIDAS domain). Interacts (via WD repeats) with NSA2.

It localises to the nucleus. It is found in the nucleolus. Involved in ribosome biogenesis. Required for processing and efficient intra-nuclear transport of pre-60S ribosomal subunits. Interacts with the AAA-ATPase Midasin, which is essential for the ATP-dependent dissociation of a group of nonribosomal factors from the pre-60S particle. This chain is Ribosome assembly protein 4, found in Chaetomium thermophilum (strain DSM 1495 / CBS 144.50 / IMI 039719) (Thermochaetoides thermophila).